The following is a 124-amino-acid chain: MFNLLLVVVGGGIGAGIRHLTNMGALRLVGPNYPWGTMAINIVGSFAMGLFIAILARRGGSNEVRLFVATGIFGGFTTFSAFSLDFATLWERGATLPAFGYALASVIGAIIALFLGLWLARSLP.

Transmembrane regions (helical) follow at residues methionine 1–threonine 21, tryptophan 35–leucine 55, leucine 66–phenylalanine 86, and phenylalanine 99–leucine 119. Na(+) contacts are provided by glycine 74 and threonine 77.

This sequence belongs to the fluoride channel Fluc/FEX (TC 1.A.43) family.

The protein localises to the cell inner membrane. The enzyme catalyses fluoride(in) = fluoride(out). Na(+) is not transported, but it plays an essential structural role and its presence is essential for fluoride channel function. Functionally, fluoride-specific ion channel. Important for reducing fluoride concentration in the cell, thus reducing its toxicity. This chain is Fluoride-specific ion channel FluC, found in Mesorhizobium japonicum (strain LMG 29417 / CECT 9101 / MAFF 303099) (Mesorhizobium loti (strain MAFF 303099)).